Consider the following 287-residue polypeptide: Protease HtpX (287 aa).

The next 2 membrane-spanning stretches (helical) occupy residues 4–24 and 33–53; these read IFLLIATNMAILLVASIVMSI and SGLLVFAAIFGFGGAFISLAI. Position 139 (H139) interacts with Zn(2+). E140 is a catalytic residue. H143 lines the Zn(2+) pocket. 2 consecutive transmembrane segments (helical) span residues 154-174 and 195-215; these read LIQGVVNTFVIFAARVVAGII and AVVFVLDMLFGILASIIVAYF. Zn(2+) is bound at residue E220.

It belongs to the peptidase M48B family. Zn(2+) serves as cofactor.

The protein localises to the cell inner membrane. The protein is Protease HtpX of Shewanella piezotolerans (strain WP3 / JCM 13877).